We begin with the raw amino-acid sequence, 277 residues long: Translation initiation factor 2 subunit alpha (277 aa).

The S1 motif domain maps to 22–93 (GEIVVGTVQE…KRGQVDVSLK (72 aa)).

It belongs to the eIF-2-alpha family. In terms of assembly, heterotrimer composed of an alpha, a beta and a gamma chain.

Functionally, eIF-2 functions in the early steps of protein synthesis by forming a ternary complex with GTP and initiator tRNA. The polypeptide is Translation initiation factor 2 subunit alpha (eif2a) (Aeropyrum pernix (strain ATCC 700893 / DSM 11879 / JCM 9820 / NBRC 100138 / K1)).